Reading from the N-terminus, the 367-residue chain is Ferrochelatase (367 aa).

Positions 226 and 307 each coordinate Fe cation.

This sequence belongs to the ferrochelatase family.

The protein localises to the cytoplasm. The enzyme catalyses heme b + 2 H(+) = protoporphyrin IX + Fe(2+). It functions in the pathway porphyrin-containing compound metabolism; protoheme biosynthesis; protoheme from protoporphyrin-IX: step 1/1. Functionally, catalyzes the ferrous insertion into protoporphyrin IX. This is Ferrochelatase from Burkholderia pseudomallei (strain 1106a).